The chain runs to 212 residues: Pyridoxine/pyridoxamine 5'-phosphate oxidase (212 aa).

Substrate contacts are provided by residues 7–10 (RRQY) and Lys-65. FMN is bound by residues 60-65 (RIVLLK), 75-76 (FT), Arg-81, Lys-82, and Gln-104. Substrate is bound by residues Tyr-122, Arg-126, and Ser-130. FMN contacts are provided by residues 139-140 (QS) and Trp-184. Substrate is bound at residue 190 to 192 (RLH). Arg-194 contacts FMN.

This sequence belongs to the pyridoxamine 5'-phosphate oxidase family. In terms of assembly, homodimer. FMN serves as cofactor.

The catalysed reaction is pyridoxamine 5'-phosphate + O2 + H2O = pyridoxal 5'-phosphate + H2O2 + NH4(+). It catalyses the reaction pyridoxine 5'-phosphate + O2 = pyridoxal 5'-phosphate + H2O2. Its pathway is cofactor metabolism; pyridoxal 5'-phosphate salvage; pyridoxal 5'-phosphate from pyridoxamine 5'-phosphate: step 1/1. The protein operates within cofactor metabolism; pyridoxal 5'-phosphate salvage; pyridoxal 5'-phosphate from pyridoxine 5'-phosphate: step 1/1. Its function is as follows. Catalyzes the oxidation of either pyridoxine 5'-phosphate (PNP) or pyridoxamine 5'-phosphate (PMP) into pyridoxal 5'-phosphate (PLP). This is Pyridoxine/pyridoxamine 5'-phosphate oxidase from Alteromonas mediterranea (strain DSM 17117 / CIP 110805 / LMG 28347 / Deep ecotype).